The primary structure comprises 543 residues: Excitatory amino acid transporter 1 (543 aa).

Over 1 to 47 (MTKSNGEDPRAGSRMERFQQGVRQRTLLAKKKVQNITKDDVKGFLKR) the chain is Cytoplasmic. The chain crosses the membrane as a helical span at residues 48 to 68 (NGFVLFTVIAVVVGSILGFSV). Over 69–86 (RSYHMTFRELKYFSFPGE) the chain is Extracellular. A helical membrane pass occupies residues 87–108 (LLMRMLQMLVLPLIVSSLVTGM). Residues 109 to 122 (AALDSKASGKMGLR) lie on the Cytoplasmic side of the membrane. The chain crosses the membrane as a helical span at residues 123 to 145 (AVVYYMTTTVIAVFIGIVIVIIV). The Extracellular portion of the chain corresponds to 146–237 (HPGKGTKEHM…MREEMIPVPG (92 aa)). N-linked (GlcNAc...) asparagine glycans are attached at residues asparagine 206 and asparagine 217. A helical membrane pass occupies residues 238–261 (AVNGVNALGLVVFSMCFGLVIGNM). Over 262 to 270 (KEQGKALKD) the chain is Cytoplasmic. A helical membrane pass occupies residues 271 to 298 (FFDSLNEAIMRLVAVIMWYAPIGILFLI). Topologically, residues 299 to 319 (AGKIAEMEDMGVVGGQLGMYT) are extracellular. The chain crosses the membrane as a helical span at residues 320 to 341 (VTVIIGLLIHAVIVLPLLYFAV). The Cytoplasmic segment spans residues 342–346 (TRKNP). The discontinuously helical intramembrane region spans 347–377 (WVFIGGILQALITALGTSSSSATLPITFKCL). 364–366 (SSS) is an L-aspartate binding site. The Cytoplasmic portion of the chain corresponds to 378–386 (EENNKVDKR). Residues 387–413 (VTRFVLPVGATINMDGTALYEALAAIF) traverse the membrane as a helical segment. Positions 395, 397, and 399 each coordinate Na(+). Threonine 403 contacts L-aspartate. The Extracellular portion of the chain corresponds to 414–426 (IAQVNNYDLNFGQ). An intramembrane region (discontinuously helical) is located at residues 427 to 460 (ILTISITATAASIGAAGIPQAGLVTMVIVLTSVG). Residue 444 to 448 (IPQAG) coordinates L-aspartate. At 461–473 (LPTDDITLIIAVD) the chain is on the extracellular side. Residues 474–495 (WFLDRLRTTTNVLGDSLGAGIV) traverse the membrane as a helical segment. The L-aspartate site is built by aspartate 477 and asparagine 484. Positions 484 and 488 each coordinate Na(+). The Cytoplasmic portion of the chain corresponds to 496 to 543 (EHLSRHELQSGDAEMGNSVIEENEMKKPYQLVSQENELEKPIDSETKM). Residues 521-543 (KKPYQLVSQENELEKPIDSETKM) form a disordered region. Over residues 532–543 (ELEKPIDSETKM) the composition is skewed to basic and acidic residues.

It belongs to the dicarboxylate/amino acid:cation symporter (DAACS) (TC 2.A.23) family. Homotrimer. In terms of tissue distribution, detected in retina (at protein level).

Its subcellular location is the cell membrane. It carries out the reaction K(+)(in) + L-glutamate(out) + 3 Na(+)(out) + H(+)(out) = K(+)(out) + L-glutamate(in) + 3 Na(+)(in) + H(+)(in). The enzyme catalyses K(+)(in) + L-aspartate(out) + 3 Na(+)(out) + H(+)(out) = K(+)(out) + L-aspartate(in) + 3 Na(+)(in) + H(+)(in). It catalyses the reaction D-aspartate(out) + K(+)(in) + 3 Na(+)(out) + H(+)(out) = D-aspartate(in) + K(+)(out) + 3 Na(+)(in) + H(+)(in). Functionally, sodium-dependent, high-affinity amino acid transporter that mediates the uptake of L-glutamate and also L-aspartate and D-aspartate. Functions as a symporter that transports one amino acid molecule together with two or three Na(+) ions and one proton, in parallel with the counter-transport of one K(+) ion. Plays a redundant role in the rapid removal of released glutamate from the synaptic cleft, which is essential for terminating the postsynaptic action of glutamate. The sequence is that of Excitatory amino acid transporter 1 (SLC1A3) from Ambystoma tigrinum (Eastern tiger salamander).